The chain runs to 1583 residues: MSNPTKISILGRESIIADFGLWRNYVAKDLISDCSSTTYVLVTDTNIGSIYTPSFEEAFRKAAAEITPSPRLLIYNAPPGEVSKSRQTKADIEDWMLSQNPPCGRDTVVIALGGGVIGDLTGFVASTYMRGVRYVQVPTTLLAMVDSSIGGKTAIDTPLGKNLIGAIWQPTKIYIDLEFLETLPVREFINGMAEVIKTAAISSEEEFTALEENAETILKAVRREVRPGEHRFEGIEEILKARILASARHKAYVVSADEREGGLRNLLNWGHSIGHAIEAILTPQILHGECVAIGMVKEAELARHLGILKGVAVSRIVKCLAAYGLPTSLKDARIRKLTAGKHCSVDQLMFNMALDKKNDGPKKKIVLLSAIGTPYETRASVVANEDIRVVLAPSIEVHPGVAQSSNVICAPPGSKSISNRALVLAALGSGTCRIKNLLHSDDTEVMLNALERLGAATFSWEEEGEVLVVNGKGGNLQASSSPLYLGNAGTASRFLTTVATLANSSTVDSSVLTGNNRMKQRPIGDLVDALTANGASIEYVERTGSLPLKIAASGGFAGGNINLAAKVSSQYVSSLLMCAPYAKEPVTLRLVGGKPISQPYIDMTTAMMRSFGIDVQKSTTEEHTYHIPQGRYVNPAEYVIESDASSATYPLAVAAVTGTTCTVPNIGSASLQGDARFAVEVLRPMGCTVEQTETSTTVTGPSDGILRPLPNVDMEPMTDAFLGASVLAAIARGKESNHTTRIYGIANQRVKECNRIKAMKDELAKFGVICREHDDGLEIDGIDRSNLRQPVGGVFCYDDHRVAFSFSVLSLVTPQPTLILEKECVGKTWPGWWDTLRQLFKVKLEGKELEEEPVAASGPDRANASIYIIGMRGAGKSTAGNWVSKALNRPFVDLDTELETVEGMTIPDIIKTRGWQGFRNAELEILKRTLKERSRGYVFACGGGVVEMPEARKLLTDYHKTKGNVLLLMRDIKKIMDFLSIDKTRPAYVEDMMGVWLRRKPWFQECSNIQYYSRDASPSGLARASEDFNRFLQVATGQIDSLSIIKEKEHSFFASLTLPDLREAGDILEEVCVGSDAVELRVDLLKDPASNNDIPSVDYVVEQLSFLRSRVTLPIIFTIRTQSQGGRFPDNAHDAALELYRLAFRSGCEFVDLEIAFPEDMLRAVTEMKGFSKIIASHHDPKGELSWANMSWIKFYNKALEYGDIIKLVGVARNIDDNTALRKFKNWAAEAHDVPLIAINMGDQGQLSRILNGFMTPVSHPSLPFKAAPGQLSATEIRKGLSLMGEIKPKKFAIFGSPISQSRSPALHNTLFAQVGLPHNYTRLETTNAQDVQEFIRSPDFGGASVTIPLKLDIMPLLDEVAAEAEIIGAVNTIIPVSTGKNTPSRLVGRNTDWQGMILSLRKAGVYGPKRKDQEQSALVVGGGGTARAAIYALHNMGYSPIYIVGRTPSKLENMVSTFPSSYNIRIVESPSSFESVPHVAIGTIPADQPIDPTMRETLCHMFERAQEADAEAVKAIEHAPRILLEMAYKPQVTALMRLASDSGWKTIPGLEVLVGQGWYQFKYWTGISPLYESARACSSPLI.

The tract at residues 1–384 is 3-dehydroquinate synthase; that stretch reads MSNPTKISIL…YETRASVVAN (384 aa). NAD(+) is bound by residues 44-46, 81-84, 114-116, and aspartate 119; these read DTN, EVSK, and GGV. Arginine 130 is a binding site for 7-phospho-2-dehydro-3-deoxy-D-arabino-heptonate. 139–140 is a binding site for NAD(+); that stretch reads TT. Residues aspartate 146 and lysine 152 each coordinate 7-phospho-2-dehydro-3-deoxy-D-arabino-heptonate. An NAD(+)-binding site is contributed by lysine 161. Position 162 (asparagine 162) interacts with 7-phospho-2-dehydro-3-deoxy-D-arabino-heptonate. Residues 179–182 and asparagine 190 each bind NAD(+); that span reads FLET. Residue glutamate 194 participates in Zn(2+) binding. Residues 194-197 and lysine 250 contribute to the 7-phospho-2-dehydro-3-deoxy-D-arabino-heptonate site; that span reads EVIK. Glutamate 260 acts as the Proton acceptor; for 3-dehydroquinate synthase activity in catalysis. 7-phospho-2-dehydro-3-deoxy-D-arabino-heptonate is bound by residues 264–268 and histidine 271; that span reads RNLLN. Histidine 271 contributes to the Zn(2+) binding site. Catalysis depends on histidine 275, which acts as the Proton acceptor; for 3-dehydroquinate synthase activity. Residues histidine 287 and lysine 356 each contribute to the 7-phospho-2-dehydro-3-deoxy-D-arabino-heptonate site. Histidine 287 lines the Zn(2+) pocket. The EPSP synthase stretch occupies residues 397–842; it reads VHPGVAQSSN…WDTLRQLFKV (446 aa). Catalysis depends on cysteine 824, which acts as the For EPSP synthase activity. The tract at residues 863 to 1055 is shikimate kinase; that stretch reads NASIYIIGMR…KEKEHSFFAS (193 aa). 870-877 provides a ligand contact to ATP; the sequence is GMRGAGKS. The 3-dehydroquinase stretch occupies residues 1056-1276; it reads LTLPDLREAG…AAPGQLSATE (221 aa). Catalysis depends on histidine 1179, which acts as the Proton acceptor; for 3-dehydroquinate dehydratase activity. The Schiff-base intermediate with substrate; for 3-dehydroquinate dehydratase activity role is filled by lysine 1207. The interval 1289–1583 is shikimate dehydrogenase; the sequence is PKKFAIFGSP…SARACSSPLI (295 aa).

It in the N-terminal section; belongs to the sugar phosphate cyclases superfamily. Dehydroquinate synthase family. This sequence in the 2nd section; belongs to the EPSP synthase family. The protein in the 3rd section; belongs to the shikimate kinase family. In the 4th section; belongs to the type-I 3-dehydroquinase family. It in the C-terminal section; belongs to the shikimate dehydrogenase family. Homodimer. Zn(2+) is required as a cofactor.

It is found in the cytoplasm. The enzyme catalyses 7-phospho-2-dehydro-3-deoxy-D-arabino-heptonate = 3-dehydroquinate + phosphate. It catalyses the reaction 3-dehydroquinate = 3-dehydroshikimate + H2O. It carries out the reaction shikimate + NADP(+) = 3-dehydroshikimate + NADPH + H(+). The catalysed reaction is shikimate + ATP = 3-phosphoshikimate + ADP + H(+). The enzyme catalyses 3-phosphoshikimate + phosphoenolpyruvate = 5-O-(1-carboxyvinyl)-3-phosphoshikimate + phosphate. The protein operates within metabolic intermediate biosynthesis; chorismate biosynthesis; chorismate from D-erythrose 4-phosphate and phosphoenolpyruvate: step 2/7. Its pathway is metabolic intermediate biosynthesis; chorismate biosynthesis; chorismate from D-erythrose 4-phosphate and phosphoenolpyruvate: step 3/7. It participates in metabolic intermediate biosynthesis; chorismate biosynthesis; chorismate from D-erythrose 4-phosphate and phosphoenolpyruvate: step 4/7. It functions in the pathway metabolic intermediate biosynthesis; chorismate biosynthesis; chorismate from D-erythrose 4-phosphate and phosphoenolpyruvate: step 5/7. The protein operates within metabolic intermediate biosynthesis; chorismate biosynthesis; chorismate from D-erythrose 4-phosphate and phosphoenolpyruvate: step 6/7. Functionally, the AROM polypeptide catalyzes 5 consecutive enzymatic reactions in prechorismate polyaromatic amino acid biosynthesis. This chain is Pentafunctional AROM polypeptide (aromA), found in Emericella nidulans (strain FGSC A4 / ATCC 38163 / CBS 112.46 / NRRL 194 / M139) (Aspergillus nidulans).